A 141-amino-acid chain; its full sequence is Hemoglobin subunit alpha-A (141 aa).

The Globin domain maps to 1 to 141; it reads MLSASDKANV…VGLVLTAKYR (141 aa). His-58 contacts O2. His-87 lines the heme b pocket.

Belongs to the globin family. In terms of assembly, there are three forms of hemoglobin in Sphenodon: A, A' and D. Hb A is a tetramer of two alpha-A and two beta-1, Hb A' is a tetramer of two alpha-a and two beta-2, Hb D is a tetramer of two alpha-D and two beta-2. Red blood cells.

Functionally, involved in oxygen transport from the lung to the various peripheral tissues. This Sphenodon punctatus (Tuatara) protein is Hemoglobin subunit alpha-A (HBAA).